A 193-amino-acid polypeptide reads, in one-letter code: Probable GTP-binding protein EngB (193 aa).

The EngB-type G domain occupies 24 to 193 (NIPEIALAGR…ELKAALAELL (170 aa)). GTP-binding positions include 32 to 39 (GRSNVGKS), 59 to 63 (GKTRT), 77 to 80 (DLPG), 144 to 147 (TKAD), and 174 to 176 (FSA). Positions 39 and 61 each coordinate Mg(2+).

It belongs to the TRAFAC class TrmE-Era-EngA-EngB-Septin-like GTPase superfamily. EngB GTPase family. The cofactor is Mg(2+).

Necessary for normal cell division and for the maintenance of normal septation. This is Probable GTP-binding protein EngB from Syntrophomonas wolfei subsp. wolfei (strain DSM 2245B / Goettingen).